A 361-amino-acid chain; its full sequence is Dual specificity mitogen-activated protein kinase kinase 6 (361 aa).

2 stretches are compositionally biased toward basic and acidic residues: residues Met-1–Val-11 and Pro-37–Glu-48. Residues Met-1–Asp-61 are disordered. Positions Val-30–Val-46 are d domain. The 262-residue stretch at Leu-80–Phe-341 folds into the Protein kinase domain. ATP is bound by residues Leu-86–Val-94 and Lys-109. Asp-206 serves as the catalytic Proton acceptor. At Ser-234 the chain carries Phosphoserine; by MAPK3. Thr-238 bears the Phosphothreonine; by MAPK3 mark. The tract at residues His-338 to Asp-361 is DVD domain.

The protein belongs to the protein kinase superfamily. STE Ser/Thr protein kinase family. MAP kinase kinase subfamily. Dimer. Interacts (via its D domain) with its MAP kinase substrates. Interacts (via its DVD domain) with MAP3Ks activators. In terms of processing, weakly autophosphorylated. Phosphorylated at Ser-234 and Thr-238 by the majority of M3Ks.

Its subcellular location is the nucleus. The protein resides in the cytoplasm. The protein localises to the cytoskeleton. The catalysed reaction is L-seryl-[protein] + ATP = O-phospho-L-seryl-[protein] + ADP + H(+). It catalyses the reaction L-threonyl-[protein] + ATP = O-phospho-L-threonyl-[protein] + ADP + H(+). It carries out the reaction L-tyrosyl-[protein] + ATP = O-phospho-L-tyrosyl-[protein] + ADP + H(+). Activated by dual phosphorylation on Ser-234 and Thr-238 in response to a variety of cellular stresses, including UV radiation, osmotic shock, hypoxia, inflammatory cytokines, interferon gamma (IFNG), and less often by growth factors. MAP2K6/MKK6 is activated by the majority of M3Ks. Functionally, dual specificity protein kinase which acts as an essential component of the MAP kinase signal transduction pathway. Catalyzes the concomitant phosphorylation of a threonine and a tyrosine residue in the MAP kinases p38 and plays an important role in the regulation of cellular responses to cytokines and all kinds of stresses. The p38 MAP kinase signal transduction pathway leads to direct activation of transcription factors. Phosphorylation by MAP2K6 asymmetrically activates p38 on one side of the blastodisc, an event which is necessary for blastomere cleavage. The polypeptide is Dual specificity mitogen-activated protein kinase kinase 6 (Danio rerio (Zebrafish)).